The chain runs to 130 residues: Small ribosomal subunit protein uS8 (130 aa).

Belongs to the universal ribosomal protein uS8 family. Part of the 30S ribosomal subunit. Contacts proteins S5 and S12.

Its function is as follows. One of the primary rRNA binding proteins, it binds directly to 16S rRNA central domain where it helps coordinate assembly of the platform of the 30S subunit. This is Small ribosomal subunit protein uS8 from Pasteurella multocida (strain Pm70).